The primary structure comprises 194 residues: Ion-translocating oxidoreductase complex subunit A (194 aa).

Helical transmembrane passes span 4–24 (LALI…QFLG), 39–59 (IGLS…SYIL), 71–91 (FLRT…TEML), 102–122 (VLGI…VALL), 135–155 (TTQG…FAAL), and 172–192 (AIGM…SGLI).

Belongs to the NqrDE/RnfAE family. The complex is composed of six subunits: RnfA, RnfB, RnfC, RnfD, RnfE and RnfG.

Its subcellular location is the cell inner membrane. In terms of biological role, part of a membrane-bound complex that couples electron transfer with translocation of ions across the membrane. This Pseudomonas paraeruginosa (strain DSM 24068 / PA7) (Pseudomonas aeruginosa (strain PA7)) protein is Ion-translocating oxidoreductase complex subunit A.